We begin with the raw amino-acid sequence, 155 residues long: Protein SprT-like (155 aa).

Positions 7 to 145 (QRHMEEVSLQ…GSCGGKLIQT (139 aa)) constitute a SprT-like domain. H67 is a Zn(2+) binding site. Residue E68 is part of the active site. H71 serves as a coordination point for Zn(2+).

Belongs to the SprT family. Requires Zn(2+) as cofactor.

The protein resides in the cytoplasm. This chain is Protein SprT-like, found in Listeria monocytogenes serovar 1/2a (strain ATCC BAA-679 / EGD-e).